The sequence spans 491 residues: Angiopoietin-related protein 1 (491 aa).

Positions 1-23 (MKTFTWTLGVLFFLLVDTGHCRG) are cleaved as a signal peptide. Positions 80–168 (ITRMDLENLK…LNVTTEMLKM (89 aa)) form a coiled coil. Residues Asn160 and Asn188 are each glycosylated (N-linked (GlcNAc...) asparagine). Residues 271–491 (FINEGPFKDC…AVQMMIKPID (221 aa)) enclose the Fibrinogen C-terminal domain. Cystine bridges form between Cys280–Cys309 and Cys432–Cys445.

In terms of tissue distribution, highly expressed in adrenal gland, placenta, thyroid gland, heart, skeletal muscle and small intestine. Weakly expressed in testis, ovary, colon, pancreas, kidney and stomach.

It localises to the secreted. This is Angiopoietin-related protein 1 (ANGPTL1) from Homo sapiens (Human).